Reading from the N-terminus, the 316-residue chain is tRNA-cytidine(32) 2-sulfurtransferase (316 aa).

The short motif at 52–57 (SGGKDS) is the PP-loop motif element. [4Fe-4S] cluster is bound by residues Cys127, Cys130, and Cys218.

This sequence belongs to the TtcA family. As to quaternary structure, homodimer. Mg(2+) is required as a cofactor. [4Fe-4S] cluster serves as cofactor.

It is found in the cytoplasm. The enzyme catalyses cytidine(32) in tRNA + S-sulfanyl-L-cysteinyl-[cysteine desulfurase] + AH2 + ATP = 2-thiocytidine(32) in tRNA + L-cysteinyl-[cysteine desulfurase] + A + AMP + diphosphate + H(+). Its pathway is tRNA modification. Its function is as follows. Catalyzes the ATP-dependent 2-thiolation of cytidine in position 32 of tRNA, to form 2-thiocytidine (s(2)C32). The sulfur atoms are provided by the cysteine/cysteine desulfurase (IscS) system. The polypeptide is tRNA-cytidine(32) 2-sulfurtransferase (Haemophilus ducreyi (strain 35000HP / ATCC 700724)).